The chain runs to 353 residues: Photosystem II D2 protein (353 aa).

At Thr-2 the chain carries N-acetylthreonine. Thr-2 bears the Phosphothreonine mark. The helical transmembrane segment at 41-61 threads the bilayer; the sequence is CAYFALGGWFTGTTFVTSWYT. Chlorophyll a is bound at residue His-118. A helical transmembrane segment spans residues 125–141; it reads GFMLRQFEIARSVNLRP. The pheophytin a site is built by Gln-130 and Asn-143. Residues 153-166 traverse the membrane as a helical segment; sequence VFVSVFLIYPLGQS. His-198 contacts chlorophyll a. A helical membrane pass occupies residues 208–228; that stretch reads AALLCAIHGATVENTLFEDGD. The a plastoquinone site is built by His-215 and Phe-262. His-215 is a Fe cation binding site. Fe cation is bound at residue His-269. Residues 279-295 traverse the membrane as a helical segment; sequence GLWMSAIGVVGLALNLR.

Belongs to the reaction center PufL/M/PsbA/D family. PSII is composed of 1 copy each of membrane proteins PsbA, PsbB, PsbC, PsbD, PsbE, PsbF, PsbH, PsbI, PsbJ, PsbK, PsbL, PsbM, PsbT, PsbX, PsbY, PsbZ, Psb30/Ycf12, at least 3 peripheral proteins of the oxygen-evolving complex and a large number of cofactors. It forms dimeric complexes. The D1/D2 heterodimer binds P680, chlorophylls that are the primary electron donor of PSII, and subsequent electron acceptors. It shares a non-heme iron and each subunit binds pheophytin, quinone, additional chlorophylls, carotenoids and lipids. There is also a Cl(-1) ion associated with D1 and D2, which is required for oxygen evolution. The PSII complex binds additional chlorophylls, carotenoids and specific lipids. is required as a cofactor.

The protein localises to the plastid. Its subcellular location is the chloroplast thylakoid membrane. The catalysed reaction is 2 a plastoquinone + 4 hnu + 2 H2O = 2 a plastoquinol + O2. Photosystem II (PSII) is a light-driven water:plastoquinone oxidoreductase that uses light energy to abstract electrons from H(2)O, generating O(2) and a proton gradient subsequently used for ATP formation. It consists of a core antenna complex that captures photons, and an electron transfer chain that converts photonic excitation into a charge separation. The D1/D2 (PsbA/PsbD) reaction center heterodimer binds P680, the primary electron donor of PSII as well as several subsequent electron acceptors. D2 is needed for assembly of a stable PSII complex. This Tetradesmus obliquus (Green alga) protein is Photosystem II D2 protein.